Here is a 219-residue protein sequence, read N- to C-terminus: Cytidylate kinase (219 aa).

Residue G21–T29 coordinates ATP.

It belongs to the cytidylate kinase family. Type 1 subfamily.

It localises to the cytoplasm. It catalyses the reaction CMP + ATP = CDP + ADP. The enzyme catalyses dCMP + ATP = dCDP + ADP. This chain is Cytidylate kinase, found in Rickettsia felis (strain ATCC VR-1525 / URRWXCal2) (Rickettsia azadi).